Consider the following 360-residue polypeptide: MIIYATEVETINSFVRLESLNEVYGLVWIFVPIFSLVLGIITGVLVIVWLERQISAGIQQRIGPEYAGPLGILQALADGTKLLFKEDLRPSRGNTPLFSIGPSIAVISILLSYSVIPFSNHLVLADLNIGIFLWIAISSIAPIGLLMSGYGSNNKYSFLGGLRAAAQSISYEIPLTLCVLSISLLSNSLSTVDIVEAQSKYGFWGWNLWRQPIGFIIFLISSLAECERLPFDLPEAEEELIAGYQTEYSGIKFGLFYVASYLNLLISALFVTILYLGGWNISIPYISILEVFKRNPVFGTTIGIFITLAKTYLVLVISIATRWTLPRLRMDQLLNLGWKFLLPISLGNLLLTTSFQLLSL.

Transmembrane regions (helical) follow at residues 27–47, 98–118, 129–149, 165–185, 203–223, 253–273, 297–317, and 340–360; these read VWIFVPIFSLVLGIITGVLVI, FSIGPSIAVISILLSYSVIPF, IGIFLWIAISSIAPIGLLMSG, AAQSISYEIPLTLCVLSISLL, FWGWNLWRQPIGFIIFLISSL, FGLFYVASYLNLLISALFVTI, VFGTTIGIFITLAKTYLVLVI, and FLLPISLGNLLLTTSFQLLSL.

This sequence belongs to the complex I subunit 1 family. As to quaternary structure, NDH is composed of at least 16 different subunits, 5 of which are encoded in the nucleus.

The protein resides in the plastid. The protein localises to the chloroplast thylakoid membrane. The enzyme catalyses a plastoquinone + NADH + (n+1) H(+)(in) = a plastoquinol + NAD(+) + n H(+)(out). It catalyses the reaction a plastoquinone + NADPH + (n+1) H(+)(in) = a plastoquinol + NADP(+) + n H(+)(out). In terms of biological role, NDH shuttles electrons from NAD(P)H:plastoquinone, via FMN and iron-sulfur (Fe-S) centers, to quinones in the photosynthetic chain and possibly in a chloroplast respiratory chain. The immediate electron acceptor for the enzyme in this species is believed to be plastoquinone. Couples the redox reaction to proton translocation, and thus conserves the redox energy in a proton gradient. This Draba nemorosa (Woodland whitlowgrass) protein is NAD(P)H-quinone oxidoreductase subunit 1, chloroplastic.